Consider the following 434-residue polypeptide: BEN domain-containing protein 7 (434 aa).

Residues Lys16, Lys56, and Lys85 each participate in a glycyl lysine isopeptide (Lys-Gly) (interchain with G-Cter in SUMO2) cross-link. Disordered regions lie at residues 96–151 and 212–262; these read PQRS…SNGE and SRKR…ERTS. Positions 97-150 are enriched in polar residues; that stretch reads QRSNSSTEASQGLHSNSRGAWNELPTQSGQFSGQSGPRSRTFQTQPHISASSNG. Over residues 212–222 the composition is skewed to basic residues; sequence SRKRNKKKKVL. Residue Lys244 forms a Glycyl lysine isopeptide (Lys-Gly) (interchain with G-Cter in SUMO2) linkage. Residues 289-399 form the BEN domain; that stretch reads GFDVFMPKSQ…RRLKRGSAEV (111 aa). Thr326 is subject to Phosphothreonine. Ser330 is subject to Phosphoserine. Residues 414–434 are disordered; it reads TGHTFVIKRETPEDPEPGSVA.

This Mus musculus (Mouse) protein is BEN domain-containing protein 7 (Bend7).